The primary structure comprises 1522 residues: Lysophospholipase NTE1 (1522 aa).

Topologically, residues 1-73 are lumenal; the sequence is MVDGTYVNSS…SLLVYLINGT (73 aa). The chain crosses the membrane as a helical span at residues 74–94; it reads VPFYLVVLGSVFTPIIVYLIL. Topologically, residues 95 to 1522 are cytoplasmic; sequence RSRVLSAYSR…IHLLHRRNSI (1428 aa). Disordered regions lie at residues 443-468, 485-523, and 535-556; these read SVQE…TPNK, DLLS…ASSP, and SQNF…PSVV. Composition is skewed to low complexity over residues 498–511 and 540–555; these read KTAS…PRIS and PLSS…KPSV. Residues 661–782 and 778–918 each bind a nucleoside 3',5'-cyclic phosphate; these read PINV…LTKL and TLTK…VAHK. Disordered stretches follow at residues 828-852 and 1125-1145; these read QKSK…DNQP and SSQN…GAPP. The 165-residue stretch at 1219 to 1383 folds into the PNPLA domain; sequence LVLGGGGARG…LDNLPVLEMK (165 aa). A GXGXXG motif is present at residues 1223–1228; it reads GGGARG. The short motif at 1250–1254 is the GXSXG element; it reads GTSIG. Ser1252 serves as the catalytic Nucleophile. The Proton acceptor role is filled by Asp1370. Positions 1370–1372 match the DGA/G motif; it reads DGG.

It belongs to the NTE family.

The protein localises to the endoplasmic reticulum membrane. The catalysed reaction is a 1-acyl-sn-glycero-3-phosphocholine + H2O = sn-glycerol 3-phosphocholine + a fatty acid + H(+). Its activity is regulated as follows. Inhibited by organophosphorus esters. Functionally, intracellular phospholipase B that catalyzes the double deacylation of phosphatidylcholine (PC) to glycerophosphocholine (GroPCho). Plays an important role in membrane lipid homeostasis. Responsible for the rapid PC turnover in response to inositol, elevated temperatures, or when choline is present in the growth medium. The chain is Lysophospholipase NTE1 (NTE1) from Eremothecium gossypii (strain ATCC 10895 / CBS 109.51 / FGSC 9923 / NRRL Y-1056) (Yeast).